Here is a 348-residue protein sequence, read N- to C-terminus: MTVRIAINGFGRIGRNVVRALYESGRRAEITVVAINELADAAGMAHLLKYDTSHGRFAWEVRHEREQLFVGDDVIRILHERTLADLPWRELGVDVVLDCTGVYGNREHGEAHIAAGAKKVLFSHPGSNGLDATVVFGVNQNELRAEHRIVSNASCTTNCIIPVIKLLDDAYGIESGTVTTIHSAMNDQQVIDAYHSDLRRTRAASQSIIPVDTKLAAGITRIFPQFNDRFEAIAVRVPTINVTAIDLSVTVKKPVKASEVNQLLQKAAQGAFHGIVDYTESPLVSIDFNHDPHSAIVDGTQTRVSGAHLIKTLVWCDNEWGFANRMLDTTLAMAAVGFRLDASASTKL.

NAD(+)-binding positions include 12 to 13 and Arg81; that span reads RI. Substrate-binding positions include 154 to 156, Arg200, 213 to 214, and Arg236; these read SCT and TK. Residue Cys155 is the Nucleophile of the active site. Residue Asn318 participates in NAD(+) binding.

The protein belongs to the glyceraldehyde-3-phosphate dehydrogenase family. Epd subfamily. Homotetramer.

It localises to the cytoplasm. It carries out the reaction D-erythrose 4-phosphate + NAD(+) + H2O = 4-phospho-D-erythronate + NADH + 2 H(+). The protein operates within cofactor biosynthesis; pyridoxine 5'-phosphate biosynthesis; pyridoxine 5'-phosphate from D-erythrose 4-phosphate: step 1/5. Catalyzes the NAD-dependent conversion of D-erythrose 4-phosphate to 4-phosphoerythronate. The protein is D-erythrose-4-phosphate dehydrogenase of Salmonella gallinarum (strain 287/91 / NCTC 13346).